Here is a 688-residue protein sequence, read N- to C-terminus: Glycine--tRNA ligase beta subunit (688 aa).

Belongs to the class-II aminoacyl-tRNA synthetase family. Tetramer of two alpha and two beta subunits.

Its subcellular location is the cytoplasm. The catalysed reaction is tRNA(Gly) + glycine + ATP = glycyl-tRNA(Gly) + AMP + diphosphate. The polypeptide is Glycine--tRNA ligase beta subunit (Colwellia psychrerythraea (strain 34H / ATCC BAA-681) (Vibrio psychroerythus)).